The following is a 504-amino-acid chain: Endochitinase (504 aa).

A signal peptide spans 1–22; it reads MNRTTLILFFIILSNTITVIHG. Positions 23 to 392 constitute a GH18 domain; the sequence is YVRGCYYTNW…NAISSELEGE (370 aa). Residues cysteine 27 and cysteine 52 are joined by a disulfide bond. Chitin-binding positions include 78–79 and 105–108; these read TE and GGYN. Glutamate 148 serves as the catalytic Proton donor. Residues tyrosine 149, 212–215, and tryptophan 362 each bind chitin; that span reads MSYD. The segment at 389-450 is disordered; that stretch reads LEGESENPEI…YDTDETEGQE (62 aa). Residues 396–408 show a composition bias toward low complexity; that stretch reads PEITTEEPSITET. A run of 2 repeats spans residues 407-420 and 421-434. The tract at residues 407-448 is 3 X 14 AA approximate tandem repeats of E-T-E-A-Y-[ED]-T-D-E-T-E-E-T-S; the sequence is ETEAYETDETEETSETEAYDTDETEETSETEATTYDTDETEG. Acidic residues predominate over residues 409–435; the sequence is EAYETDETEETSETEAYDTDETEETSE. The stretch at 435 to 448 is one 3; approximate repeat; that stretch reads ETEATTYDTDETEG. Residues 448–504 form the Chitin-binding type-2 domain; it reads GQECPERDGLFPHPTDCHLFIQCANNIAYVMQCPATTFFNDAIKVCDHMTNAPDTCI. Cysteine 480 and cysteine 493 form a disulfide bridge.

Belongs to the glycosyl hydrolase 18 family. Chitinase class II subfamily. In terms of processing, O-glycosylated.

The enzyme catalyses Random endo-hydrolysis of N-acetyl-beta-D-glucosaminide (1-&gt;4)-beta-linkages in chitin and chitodextrins.. Its function is as follows. Microfilarial chitinase, which may function to degrade chitin-containing structures in the micro-filaria or in its mosquito vector during parasite development and transmission. This Brugia malayi (Filarial nematode worm) protein is Endochitinase.